Consider the following 302-residue polypeptide: Putative peptide permease protein BOV_A0350 (302 aa).

Residues 1–22 (MRSSIHASRLRKMGQSIPASTG) form a disordered region. The next 6 helical transmembrane spans lie at 38–58 (IFGL…PLWL), 101–121 (LLVA…IGAI), 147–167 (IFLL…VVVI), 200–222 (AGLG…VVYA), 230–250 (ILLE…AASW), and 268–288 (WQWL…NFIG). Positions 97 to 288 (GRISLLVAVS…LAVLAINFIG (192 aa)) constitute an ABC transmembrane type-1 domain.

This sequence belongs to the binding-protein-dependent transport system permease family. The complex is composed of two ATP-binding proteins (BOV_A0347 and BOV_A0348), two transmembrane proteins (BOV_A0350 and BOV_A0351) and a solute-binding protein (BOV_A0352).

It localises to the cell inner membrane. Probably part of an ABC transporter complex that could be involved in peptide import. Probably responsible for the translocation of the substrate across the membrane. The chain is Putative peptide permease protein BOV_A0350 from Brucella ovis (strain ATCC 25840 / 63/290 / NCTC 10512).